We begin with the raw amino-acid sequence, 2839 residues long: PDZ domain-containing protein 2 (2839 aa).

The PDZ 1 domain occupies 85–182 (LSFGNIPVFG…LIMLRRFKHK (98 aa)). Residues 185 to 318 (STYNGNSSNS…RFSKGGKTDF (134 aa)) are disordered. Over residues 189–202 (GNSSNSSEPGETPT) the composition is skewed to low complexity. A compositionally biased stretch (basic and acidic residues) spans 280–296 (HLERSEVDRGTEHRIPK). The PDZ 2 domain maps to 334–419 (KMELLKESDG…MVQLVVASKE (86 aa)). Residues 437 to 447 (TSSVEDVSSWT) are compositionally biased toward polar residues. A disordered region spans residues 437-501 (TSSVEDVSSW…PKQGSNKIKL (65 aa)). Positions 448-461 (DNEDQEADGEEDEG) are enriched in acidic residues. Ser568 carries the phosphoserine modification. The PDZ 3 domain maps to 586–672 (IIGLYKEKGK…GLFVLTVRTK (87 aa)). Residues 678–697 (LTPCSTPTHMSRSASPNFNT) are compositionally biased toward polar residues. Positions 678-723 (LTPCSTPTHMSRSASPNFNTSGGASAGGSDEGSSSSLGRKTPGPKD) are disordered. A PDZ 4 domain is found at 728–813 (EVTLNKEPRV…GPVRLVIGRH (86 aa)). Composition is skewed to polar residues over residues 832–843 (YQESKEANSSPG) and 894–908 (GCST…PSTS). Disordered regions lie at residues 832–852 (YQES…KSPS) and 879–921 (DFMV…ANSL). 2 positions are modified to phosphoserine: Ser944 and Ser948. Disordered regions lie at residues 984-1033 (SLPG…ISAP), 1062-1155 (SAEA…PCDL), 1216-1493 (KAAS…GAPA), 1530-1620 (FHED…LPTQ), 1638-1712 (PRES…SPLS), 1809-1865 (NQGT…DLSK), 1892-1976 (GKAK…SVSD), 2009-2079 (PDRG…GNIM), 2135-2166 (QVAE…SMAK), 2178-2211 (IRKA…GEDH), 2232-2251 (HFGR…DSQV), 2353-2383 (AKSG…GSLG), 2426-2481 (SRQN…SRSK), and 2516-2564 (ITPR…GEAA). A compositionally biased stretch (basic and acidic residues) spans 1012–1022 (MDVHNQEERPR). Polar residues-rich tracts occupy residues 1092-1111 (RTDT…QQKS), 1138-1147 (SGSQTVNLTG), 1221-1236 (LGQQ…SDLI), 1250-1269 (SKTS…SQPA), 1305-1315 (TRSASETSTPH), 1384-1401 (SVSS…PSTD), and 1440-1453 (RSPS…GSQE). Low complexity predominate over residues 1662-1672 (SSQPSSLLEMS). The span at 1698-1711 (EVTSASSAMENSPL) shows a compositional bias: polar residues. The residue at position 1850 (Ser1850) is a Phosphoserine. Residues 1919–1931 (SPQTSHKTLSKAV) show a composition bias toward polar residues. Residues 1936–1945 (HVADHEDPDR) show a composition bias toward basic and acidic residues. Positions 2139–2152 (SSTSHPSSLPSHAS) are enriched in low complexity. Residues 2370–2383 (GRRSSGSIVSGSLG) are compositionally biased toward low complexity. Polar residues-rich tracts occupy residues 2426–2437 (SRQNPPETSSKG), 2470–2480 (RHTQPSPVSRS), and 2546–2559 (PKTS…SASD). Positions 2622–2706 (FIVLNRKEGS…HKDALVVIKK (85 aa)) constitute a PDZ 5 domain. A disordered region spans residues 2709-2729 (DQPRPSARQEPPTANGKGLLS). Residues 2750–2835 (CVEVLKTSAG…GPVQLLIRKH (86 aa)) enclose the PDZ 6 domain.

In terms of assembly, interacts with SCN10A, CTNND2 and PKP4. In terms of processing, a secreted form is produced by caspase-mediated proteolytic cleavage. Isoform 2 is expressed (at protein level) in prostate and many prostate tumors.

The protein resides in the nucleus. Its subcellular location is the cytoplasm. It localises to the endoplasmic reticulum. It is found in the secreted. The polypeptide is PDZ domain-containing protein 2 (PDZD2) (Homo sapiens (Human)).